Here is a 237-residue protein sequence, read N- to C-terminus: Phosphoribosylaminoimidazole-succinocarboxamide synthase (237 aa).

It belongs to the SAICAR synthetase family.

The catalysed reaction is 5-amino-1-(5-phospho-D-ribosyl)imidazole-4-carboxylate + L-aspartate + ATP = (2S)-2-[5-amino-1-(5-phospho-beta-D-ribosyl)imidazole-4-carboxamido]succinate + ADP + phosphate + 2 H(+). The protein operates within purine metabolism; IMP biosynthesis via de novo pathway; 5-amino-1-(5-phospho-D-ribosyl)imidazole-4-carboxamide from 5-amino-1-(5-phospho-D-ribosyl)imidazole-4-carboxylate: step 1/2. In Alteromonas mediterranea (strain DSM 17117 / CIP 110805 / LMG 28347 / Deep ecotype), this protein is Phosphoribosylaminoimidazole-succinocarboxamide synthase.